Consider the following 251-residue polypeptide: HTH-type transcriptional regulator UlaR (251 aa).

One can recognise an HTH deoR-type domain in the interval 3 to 58 (EAQRHQILLEMLAQLGFVTVEKVVERLGISPATARRDINKLDESGKLKKVRNGAEA). Positions 20–39 (VTVEKVVERLGISPATARRD) form a DNA-binding region, H-T-H motif.

The protein localises to the cytoplasm. In terms of biological role, represses ulaG and the ulaABCDEF operon. The polypeptide is HTH-type transcriptional regulator UlaR (Shigella dysenteriae serotype 1 (strain Sd197)).